The chain runs to 843 residues: OTU domain-containing protein 7B (843 aa).

Residues 50–88 (GNLPPSFSEGSGGSRTPEKGFSDREPTRPPRPILQRQDD) form a disordered region. Positions 65–77 (TPEKGFSDREPTR) are enriched in basic and acidic residues. Serine 100 carries the post-translational modification Phosphoserine. Residues 152–401 (ERDLIEQSML…AVDPGKGWEW (250 aa)) form a TRAF-binding region. Residues 167 to 440 (AGRLNWWVSV…VKWIPLSSDA (274 aa)) are catalytic. In terms of domain architecture, OTU spans 183–365 (LLPLATTGDG…QAHFSALVSM (183 aa)). The regulatory loop stretch occupies residues 187-193 (ATTGDGN). Residue aspartate 191 is part of the active site. Catalysis depends on cysteine 194, which acts as the Nucleophile. Histidine 358 serves as the catalytic Proton acceptor. Disordered stretches follow at residues 442-587 (APLA…GGSK) and 652-711 (IMNG…CQEP). 2 stretches are compositionally biased toward basic and acidic residues: residues 456–471 (DEPRSTPESGDSDKES) and 488–500 (SKRDREKDKKRAD). A phosphoserine mark is found at serine 464, serine 467, and serine 471. Residues 483–498 (RRKEKSKRDREKDKKR) carry the Nuclear localization signal motif. Residues 531-543 (KPGGVGTGLGGSS) show a composition bias toward gly residues. The segment covering 665–675 (KKPEPDAREEQ) has biased composition (basic and acidic residues). Position 729 is a phosphothreonine (threonine 729). The interval 732–792 (RQCPPGRPYP…PEPDGWAGGL (61 aa)) is disordered. An A20-type zinc finger spans residues 796–831 (PPTQTKCKQPNCSFYGHPETNNFCSCCYREELRRRE). Zn(2+) contacts are provided by cysteine 802, cysteine 807, cysteine 819, and cysteine 822.

This sequence belongs to the peptidase C64 family. Interacts with ZAP70 in activated T cells, but not in resting T cells. Interacts with TRAF3. Interacts with TRAF6. Interacts with PARK7, leading to inhibit deubiquitinase activity. Interacts with EGFR, ITCH and NEDD4. Post-translationally, phosphorylated by EGFR. In terms of tissue distribution, widely expressed. Abundant in kidney, heart and fetal liver. Expressed differentially among B-cells at distinct developmental stages. Higher expression seen in primary immature B-cells as compared to the mature cells.

It localises to the cytoplasm. The protein localises to the nucleus. It carries out the reaction Thiol-dependent hydrolysis of ester, thioester, amide, peptide and isopeptide bonds formed by the C-terminal Gly of ubiquitin (a 76-residue protein attached to proteins as an intracellular targeting signal).. Deubiquitinase activity is inhibited following interaction with PARK7. In terms of biological role, negative regulator of the non-canonical NF-kappa-B pathway that acts by mediating deubiquitination of TRAF3, an inhibitor of the NF-kappa-B pathway, thereby acting as a negative regulator of B-cell responses. In response to non-canonical NF-kappa-B stimuli, deubiquitinates 'Lys-48'-linked polyubiquitin chains of TRAF3, preventing TRAF3 proteolysis and over-activation of non-canonical NF-kappa-B. Negatively regulates mucosal immunity against infections. Deubiquitinates ZAP70, and thereby regulates T cell receptor (TCR) signaling that leads to the activation of NF-kappa-B. Plays a role in T cell homeostasis and is required for normal T cell responses, including production of IFNG and IL2. Mediates deubiquitination of EGFR. Has deubiquitinating activity toward 'Lys-11', 'Lys-48' and 'Lys-63'-linked polyubiquitin chains. Has a much higher catalytic rate with 'Lys-11'-linked polyubiquitin chains (in vitro); however the physiological significance of these data are unsure. Hydrolyzes both linear and branched forms of polyubiquitin. Acts as a regulator of mTORC1 and mTORC2 assembly by mediating 'Lys-63'-linked deubiquitination of MLST8, thereby promoting assembly of the mTORC2 complex, while inibiting formation of the mTORC1 complex. The polypeptide is OTU domain-containing protein 7B (OTUD7B) (Homo sapiens (Human)).